The following is a 1900-amino-acid chain: Phosphatidylinositol 4-kinase STT4 (1900 aa).

Residue serine 459 is modified to Phosphoserine. One can recognise a PIK helical domain in the interval 1345 to 1530 (KIEGADSNEL…KPTLDRIRER (186 aa)). The pleckstrin homology (PH) domain conferring phosphoinositide binding specificity stretch occupies residues 1531 to 1648 (MVSSFSQSHR…EKWQAAIFKV (118 aa)). The 268-residue stretch at 1617–1884 (FMATFKIKKD…LIRKSYESIF (268 aa)) folds into the PI3K/PI4K catalytic domain. A G-loop region spans residues 1623–1629 (IKKDVKD). Residues 1751-1759 (QFKDRHNGN) form a catalytic loop region. The tract at residues 1770 to 1794 (HIDFGFIFDIVPGGIKFEAVPFKLT) is activation loop.

It belongs to the PI3/PI4-kinase family. Type III PI4K subfamily.

It carries out the reaction a 1,2-diacyl-sn-glycero-3-phospho-(1D-myo-inositol) + ATP = a 1,2-diacyl-sn-glycero-3-phospho-(1D-myo-inositol 4-phosphate) + ADP + H(+). Its function is as follows. Acts on phosphatidylinositol (PI) in the first committed step in the production of the second messenger inositol 1,4,5,-trisphosphate. STT4 functions in PKC1 protein kinase pathway. The chain is Phosphatidylinositol 4-kinase STT4 (STT4) from Saccharomyces cerevisiae (strain ATCC 204508 / S288c) (Baker's yeast).